The primary structure comprises 345 residues: Eukaryotic translation initiation factor 3 subunit F (345 aa).

In terms of domain architecture, MPN spans 30-166; it reads VVIQPQAIFS…TRAYISAPVG (137 aa). The tract at residues 310–345 is disordered; the sequence is EGASAEAGAQRGQRGGKGGRGGQQRTQERASEEVRA. Positions 312–321 are enriched in low complexity; sequence ASAEAGAQRG. The segment covering 322-331 has biased composition (gly residues); that stretch reads QRGGKGGRGG. The segment covering 335–345 has biased composition (basic and acidic residues); sequence TQERASEEVRA.

The protein belongs to the eIF-3 subunit F family. In terms of assembly, component of the eukaryotic translation initiation factor 3 (eIF-3) complex.

It localises to the cytoplasm. In terms of biological role, component of the eukaryotic translation initiation factor 3 (eIF-3) complex, which is involved in protein synthesis of a specialized repertoire of mRNAs and, together with other initiation factors, stimulates binding of mRNA and methionyl-tRNAi to the 40S ribosome. The eIF-3 complex specifically targets and initiates translation of a subset of mRNAs involved in cell proliferation. The chain is Eukaryotic translation initiation factor 3 subunit F from Aspergillus fumigatus (strain CBS 144.89 / FGSC A1163 / CEA10) (Neosartorya fumigata).